The chain runs to 137 residues: Small ribosomal subunit protein uS9 (137 aa).

It belongs to the universal ribosomal protein uS9 family.

The sequence is that of Small ribosomal subunit protein uS9 from Picosynechococcus sp. (strain ATCC 27264 / PCC 7002 / PR-6) (Agmenellum quadruplicatum).